The primary structure comprises 248 residues: 4-hydroxy-tetrahydrodipicolinate reductase (248 aa).

NAD(+) contacts are provided by residues 9-14 (GARGKV), 77-79 (GTT), and 104-107 (APNF). His-134 serves as the catalytic Proton donor/acceptor. Residue His-135 coordinates (S)-2,3,4,5-tetrahydrodipicolinate. Lys-138 functions as the Proton donor in the catalytic mechanism. 144-145 (GT) is a binding site for (S)-2,3,4,5-tetrahydrodipicolinate.

This sequence belongs to the DapB family.

Its subcellular location is the cytoplasm. It carries out the reaction (S)-2,3,4,5-tetrahydrodipicolinate + NAD(+) + H2O = (2S,4S)-4-hydroxy-2,3,4,5-tetrahydrodipicolinate + NADH + H(+). It catalyses the reaction (S)-2,3,4,5-tetrahydrodipicolinate + NADP(+) + H2O = (2S,4S)-4-hydroxy-2,3,4,5-tetrahydrodipicolinate + NADPH + H(+). It participates in amino-acid biosynthesis; L-lysine biosynthesis via DAP pathway; (S)-tetrahydrodipicolinate from L-aspartate: step 4/4. Its function is as follows. Catalyzes the conversion of 4-hydroxy-tetrahydrodipicolinate (HTPA) to tetrahydrodipicolinate. The polypeptide is 4-hydroxy-tetrahydrodipicolinate reductase (Nocardia farcinica (strain IFM 10152)).